Consider the following 481-residue polypeptide: FAD-linked oxidoreductase afoF (481 aa).

An N-terminal signal peptide occupies residues 1–16; the sequence is MRFLLQSITLVAAARA. Positions 52 to 227 constitute an FAD-binding PCMH-type domain; it reads SEWRPPTWTG…TAATFKMFDQ (176 aa). A glycan (N-linked (GlcNAc...) asparagine) is linked at asparagine 82. Histidine 92 is subject to Pros-8alpha-FAD histidine. 6 N-linked (GlcNAc...) asparagine glycosylation sites follow: asparagine 196, asparagine 241, asparagine 276, asparagine 309, asparagine 312, and asparagine 376.

Belongs to the oxygen-dependent FAD-linked oxidoreductase family. FAD is required as a cofactor.

Functionally, FAD-linked oxidoreductase; part of the gene cluster that mediates the biosynthesis of asperfuranone, a probable antitumor agent. The polyketide synthase afoG is responsible for producing the 3,5-dimethyloctadienone moiety from acetyl-CoA, three malonyl-CoA, and two S-adenosyl methionines (SAM). The 3,5-dimethyloctadienone moiety is then loaded onto the SAT domain of afoE and extended with four malonyl-CoA and one SAM, which leads to the formation of 2,4-dihydroxy-6-(5,7-dimethyl-2-oxo-trans-3-trans-5-nonadienyl)-3-methylbenzaldehyde (compound 2) after reductive release and aldol condensation. AfoD is the next enzyme in the biosynthesis sequence and hydroxylates the side chain at the benzylic position of compound 2. After benzylic hydroxylation, a furan ring is formed after five-member ring hemiacetal formation and water elimination. AfoF and afoC are proposed to oxidize the R-diketone proton and to reduce the unconjugated carbonyl group, respectively, to generate asperfuranone. Since no intermediates could be isolated from afoF and afoC deletants, the sequence of these two enzymes is not fully understood. Moreover, since afoC deletant still produces a small amount of asperfuranone, other endogenous oxidoreductases might catalyze the same reaction with much less efficiency. The protein is FAD-linked oxidoreductase afoF of Emericella nidulans (strain FGSC A4 / ATCC 38163 / CBS 112.46 / NRRL 194 / M139) (Aspergillus nidulans).